The following is a 91-amino-acid chain: UPF0335 protein BRADO1188 (91 aa).

Belongs to the UPF0335 family.

The sequence is that of UPF0335 protein BRADO1188 from Bradyrhizobium sp. (strain ORS 278).